The primary structure comprises 344 residues: Phenylalanine--tRNA ligase alpha subunit (344 aa).

Position 259 (Glu-259) interacts with Mg(2+).

It belongs to the class-II aminoacyl-tRNA synthetase family. Phe-tRNA synthetase alpha subunit type 1 subfamily. As to quaternary structure, tetramer of two alpha and two beta subunits. Mg(2+) is required as a cofactor.

It localises to the cytoplasm. It catalyses the reaction tRNA(Phe) + L-phenylalanine + ATP = L-phenylalanyl-tRNA(Phe) + AMP + diphosphate + H(+). The sequence is that of Phenylalanine--tRNA ligase alpha subunit from Nitrosospira multiformis (strain ATCC 25196 / NCIMB 11849 / C 71).